The sequence spans 214 residues: Peptide methionine sulfoxide reductase MsrA 2 (214 aa).

The active site involves cysteine 45.

This sequence belongs to the MsrA Met sulfoxide reductase family.

It carries out the reaction L-methionyl-[protein] + [thioredoxin]-disulfide + H2O = L-methionyl-(S)-S-oxide-[protein] + [thioredoxin]-dithiol. The enzyme catalyses [thioredoxin]-disulfide + L-methionine + H2O = L-methionine (S)-S-oxide + [thioredoxin]-dithiol. Its function is as follows. Has an important function as a repair enzyme for proteins that have been inactivated by oxidation. Catalyzes the reversible oxidation-reduction of methionine sulfoxide in proteins to methionine. The polypeptide is Peptide methionine sulfoxide reductase MsrA 2 (msrA2) (Synechocystis sp. (strain ATCC 27184 / PCC 6803 / Kazusa)).